We begin with the raw amino-acid sequence, 488 residues long: UDP-N-acetylmuramate--L-alanine ligase (488 aa).

127–133 (GTHGKTT) is an ATP binding site.

The protein belongs to the MurCDEF family.

The protein localises to the cytoplasm. The enzyme catalyses UDP-N-acetyl-alpha-D-muramate + L-alanine + ATP = UDP-N-acetyl-alpha-D-muramoyl-L-alanine + ADP + phosphate + H(+). It participates in cell wall biogenesis; peptidoglycan biosynthesis. In terms of biological role, cell wall formation. The protein is UDP-N-acetylmuramate--L-alanine ligase of Shewanella sp. (strain ANA-3).